We begin with the raw amino-acid sequence, 243 residues long: uncharacterized protein (243 aa).

Residues 1-19 (MDELALSFSLTCLLPENRA) form the signal peptide. N136 carries an N-linked (GlcNAc...) asparagine glycan.

The protein localises to the secreted. This is an uncharacterized protein from Homo sapiens (Human).